Reading from the N-terminus, the 407-residue chain is Phosphopentomutase (407 aa).

The Mn(2+) site is built by aspartate 10, aspartate 306, histidine 311, aspartate 347, histidine 348, and histidine 359.

This sequence belongs to the phosphopentomutase family. Mn(2+) is required as a cofactor.

It localises to the cytoplasm. It carries out the reaction 2-deoxy-alpha-D-ribose 1-phosphate = 2-deoxy-D-ribose 5-phosphate. The catalysed reaction is alpha-D-ribose 1-phosphate = D-ribose 5-phosphate. The protein operates within carbohydrate degradation; 2-deoxy-D-ribose 1-phosphate degradation; D-glyceraldehyde 3-phosphate and acetaldehyde from 2-deoxy-alpha-D-ribose 1-phosphate: step 1/2. Functionally, isomerase that catalyzes the conversion of deoxy-ribose 1-phosphate (dRib-1-P) and ribose 1-phosphate (Rib-1-P) to deoxy-ribose 5-phosphate (dRib-5-P) and ribose 5-phosphate (Rib-5-P), respectively. The protein is Phosphopentomutase of Salmonella paratyphi C (strain RKS4594).